A 448-amino-acid chain; its full sequence is Carbamoyl phosphate synthase arginine-specific small chain (448 aa).

Residues 1-27 constitute a mitochondrion transit peptide; the sequence is MFKNIARLASMARSAPRTTASFQTRFM. The Glutamine amidotransferase type-1 domain maps to 224–415; that stretch reads HIAVIDCGVK…LGQVHQYRAA (192 aa). The Nucleophile role is filled by cysteine 304. Active-site residues include histidine 388 and glutamate 390.

This sequence belongs to the CarA family. In terms of assembly, heterodimer composed of 2 chains; the small (or glutamine) chain promotes the hydrolysis of glutamine to ammonia, which is used by the large (or ammonia) chain to synthesize carbamoyl phosphate.

The protein localises to the mitochondrion matrix. It carries out the reaction hydrogencarbonate + L-glutamine + 2 ATP + H2O = carbamoyl phosphate + L-glutamate + 2 ADP + phosphate + 2 H(+). The enzyme catalyses L-glutamine + H2O = L-glutamate + NH4(+). It participates in amino-acid biosynthesis; L-arginine biosynthesis; carbamoyl phosphate from bicarbonate: step 1/1. Functionally, small subunit of the arginine-specific carbamoyl phosphate synthase (CPSase). CPSase catalyzes the formation of carbamoyl phosphate from the ammonia moiety of glutamine, carbonate, and phosphate donated by ATP, the first step of the arginine biosynthetic pathway. The small subunit (glutamine amidotransferase) binds and cleaves glutamine to supply the large subunit with the substrate ammonia. The polypeptide is Carbamoyl phosphate synthase arginine-specific small chain (CPA1) (Yarrowia lipolytica (strain CLIB 122 / E 150) (Yeast)).